A 151-amino-acid chain; its full sequence is Ribosome maturation factor RimP (151 aa).

This sequence belongs to the RimP family.

Its subcellular location is the cytoplasm. In terms of biological role, required for maturation of 30S ribosomal subunits. The sequence is that of Ribosome maturation factor RimP from Aliivibrio fischeri (strain MJ11) (Vibrio fischeri).